The primary structure comprises 155 residues: Egg cell-secreted protein 1.5 (155 aa).

Positions 1–32 (MATKSTSKPLLLSFLMMSYLISTFHVITVAEG) are cleaved as a signal peptide.

Belongs to the plant egg cell-secreted peptide family. In terms of tissue distribution, restricted to female reproductive tissues, specifically accumulating in storage vesicles of the unfertilized egg cell.

The protein resides in the cytoplasmic vesicle. It is found in the secreted. Functionally, involved in the regulation of gamete interactions during the double fertilization and to prevent multiple-pollen tube attraction; mediates the redistribution of the gamete fusogen HAP2/GCS1 to the cell surface after secretion upon sperm arrival. The protein is Egg cell-secreted protein 1.5 (EC1.5) of Arabidopsis thaliana (Mouse-ear cress).